Consider the following 362-residue polypeptide: Histidine biosynthesis bifunctional protein HisB (362 aa).

The histidinol-phosphatase stretch occupies residues 1 to 173 (MQPTLFIDRD…TVTNCGKRPP (173 aa)). The Nucleophile role is filled by Asp8. Positions 8 and 10 each coordinate Mg(2+). Residue Asp10 is the Proton donor of the active site. Residues Cys91, His93, Cys99, and Cys101 each contribute to the Zn(2+) site. Asp128 provides a ligand contact to Mg(2+). The interval 174–362 (RFAEVIRQTK…NEMPSSKGVL (189 aa)) is imidazoleglycerol-phosphate dehydratase.

It in the N-terminal section; belongs to the histidinol-phosphatase family. In the C-terminal section; belongs to the imidazoleglycerol-phosphate dehydratase family. Requires Mg(2+) as cofactor. It depends on Zn(2+) as a cofactor.

Its subcellular location is the cytoplasm. It carries out the reaction D-erythro-1-(imidazol-4-yl)glycerol 3-phosphate = 3-(imidazol-4-yl)-2-oxopropyl phosphate + H2O. The enzyme catalyses L-histidinol phosphate + H2O = L-histidinol + phosphate. The protein operates within amino-acid biosynthesis; L-histidine biosynthesis; L-histidine from 5-phospho-alpha-D-ribose 1-diphosphate: step 6/9. It functions in the pathway amino-acid biosynthesis; L-histidine biosynthesis; L-histidine from 5-phospho-alpha-D-ribose 1-diphosphate: step 8/9. The chain is Histidine biosynthesis bifunctional protein HisB from Haemophilus influenzae (strain 86-028NP).